The chain runs to 172 residues: Chromosome-anchoring protein RacA (172 aa).

The segment at residues 5–25 (TSDVAIRLGVSPKTIQRWVRK) is a DNA-binding region (H-T-H motif). 2 disordered regions span residues 57–76 (AAME…RNNI) and 142–172 (QLNN…GLFA). The span at 62–71 (PPTPKRPPTP) shows a compositional bias: pro residues. The stretch at 83 to 146 (ESIEPEIARV…ARLEQQLNNR (64 aa)) forms a coiled coil. The span at 142 to 151 (QLNNRPPSSH) shows a compositional bias: polar residues.

It belongs to the RacA family.

The protein resides in the cytoplasm. Required for the formation of axial filaments and for anchoring the origin regions at the cell poles in sporulating cells, thus ensuring proper chromosome segregation in the prespore. Binds in a dispersed manner throughout the chromosome but preferentially to sites clustered in the origin portion of the chromosome, causing condensation of the chromosome and its remodeling into an elongated, anchored structure. The sequence is that of Chromosome-anchoring protein RacA from Geobacillus kaustophilus (strain HTA426).